A 274-amino-acid polypeptide reads, in one-letter code: Copper chaperone for superoxide dismutase (274 aa).

The 64-residue stretch at Val-11–Val-74 folds into the HMA domain. Cu cation is bound by residues Cys-22 and Cys-25. Lys-76 is covalently cross-linked (Glycyl lysine isopeptide (Lys-Gly) (interchain with G-Cter in ubiquitin)). The segment at Ala-88–Ala-234 is superoxide dismutase-like. A disulfide bridge connects residues Cys-141 and Cys-227. Zn(2+) is bound by residues His-147, His-155, His-164, and Asp-167. Glycyl lysine isopeptide (Lys-Gly) (interchain with G-Cter in ubiquitin) cross-links involve residues Lys-189, Lys-216, and Lys-241. Residues Cys-244 and Cys-246 each coordinate Cu cation. Ser-267 carries the phosphoserine modification.

This sequence in the C-terminal section; belongs to the Cu-Zn superoxide dismutase family. Homodimer, and heterodimer with SOD1. Interacts with COMMD1. Interacts with XIAP/BIRC4. Interacts with SLC31A1(via C-terminal domain); this interaction is Cu(1+)-mediated. The heterodimer CCS:SOD1 interacts with SLC31A1; this heterotrimer is Cu(1+)-mediated and its maintenance is regulated through SOD1 activation. It depends on Cu(2+) as a cofactor. The cofactor is Zn(2+). Post-translationally, ubiquitinion by XIAP/BIRC4 leads to enhancement of its chaperone activity toward its physiologic target, SOD1, rather than proteasomal degradation. XIAP/BIRC4 preferentially ubiquitinates at Lys-241. Ubiquitous.

The protein resides in the cytoplasm. In terms of biological role, delivers copper to copper zinc superoxide dismutase (SOD1). The protein is Copper chaperone for superoxide dismutase of Mus musculus (Mouse).